The following is a 1348-amino-acid chain: Phosphoribosylformylglycinamidine synthase (1348 aa).

ATP is bound by residues 300–311 (GAATGAGGEIRD) and alanine 701. Mg(2+) is bound by residues aspartate 702, glutamate 741, asparagine 745, and aspartate 941. Residue serine 943 coordinates ATP. A Glutamine amidotransferase type-1 domain is found at 1099-1348 (VAILREQGVN…MFRNARVWCG (250 aa)). Catalysis depends on cysteine 1192, which acts as the Nucleophile. Active-site residues include histidine 1313 and glutamate 1315.

This sequence in the N-terminal section; belongs to the FGAMS family. Monomer.

The protein localises to the cytoplasm. The catalysed reaction is N(2)-formyl-N(1)-(5-phospho-beta-D-ribosyl)glycinamide + L-glutamine + ATP + H2O = 2-formamido-N(1)-(5-O-phospho-beta-D-ribosyl)acetamidine + L-glutamate + ADP + phosphate + H(+). The protein operates within purine metabolism; IMP biosynthesis via de novo pathway; 5-amino-1-(5-phospho-D-ribosyl)imidazole from N(2)-formyl-N(1)-(5-phospho-D-ribosyl)glycinamide: step 1/2. Phosphoribosylformylglycinamidine synthase involved in the purines biosynthetic pathway. Catalyzes the ATP-dependent conversion of formylglycinamide ribonucleotide (FGAR) and glutamine to yield formylglycinamidine ribonucleotide (FGAM) and glutamate. The chain is Phosphoribosylformylglycinamidine synthase from Xanthomonas axonopodis pv. citri (strain 306).